A 108-amino-acid chain; its full sequence is Alkyltransferase-like protein 1 (108 aa).

It belongs to the MGMT family. ATL subfamily.

Its function is as follows. Involved in DNA damage recognition. Binds DNA containing O(6)-methylguanine and larger O(6)-alkylguanine adducts. The DNA is bent, the damaged base is rotated out of the DNA duplex into a hydrophobic binding pocket (nucleotide flipping), with Arg-39 donating a hydrogen bond to the orphaned cytosine to stabilize the extrahelical DNA conformation. This structural change in DNA presents the lesion to the nucleotide excision repair (NER) pathway. The affinity for O(6)-alkylguanine adducts increases with the size of the alkyl group. Low affinity small O(6)-alkylguanines are directed to the global genome repair pathway of NER via rhp7-rhp16 and rhp41-rhp23, while strong binding to bulky O(6)-alkylguanines stalls the transcription machinery and diverts the damage to the transcription-coupled repair pathway of NER via rhp26. This is Alkyltransferase-like protein 1 from Schizosaccharomyces pombe (strain 972 / ATCC 24843) (Fission yeast).